The sequence spans 1941 residues: MAQGSGGREGALRTPAGGWHSPPSPDMQELLRSVERDLSIDPRQLAPAPGGTHVVALVPARWLASLRDRRLPLGPCPRAEGLGEAEVRTLLQRSVQRLPAGWTRVEVHGLRKRRLSYPLGGGLPFEDGSCGPETLTRFMQEVAAQNYRNLWRHAYHTYGQPYSHSPAPSAVPALDSVRQALQRVYGCSFLPVGETTQCPSYAREGPCPPRGSPACPSLLRAEALLESPEMLYVVHPYVQFSLHDVVTFSPAKLTNSQAKVLFILFRVLRAMDACHRQGLACGALSLYHIAVDEKLCSELRLDLSAYERPEEDENEEAPVARDEAGIVSQEEQGGQPGQPTGQEELRSLVLDWVHGRISNFHYLMQLNRLAGRRQGDPNYHPVLPWVVDFTTPHGRFRDLRKSKFRLNKGDKQLDFTYEMTRQAFVAGGAGGGEPPHVPHHISDVLSDITYYVYKARRTPRSVLCGHVRAQWEPHEYPASMERMQNWTPDECIPEFYTDPSIFRSIHPDMPDLDVPAWCSSSQEFVAAHRALLESREVSRDLHHWIDLTFGYKLQGKEAVKEKNVCLHLVDAHTHLASYGVVQLFDQPHPQRLAGAPALAPEPPLIPKLLVQTIQETTGREDFTENPGQLPNGVGRPVLEATPCEASWTRDRPVAGEDDLEQATEALDSISLAGKAGDQLGSSSQASPGLLSFSVASASRPGRRNKAAGADPGEGEEGRILLPEGFNPMQALEELEKTGNFLAKGLGGLLEVPEQPRVQPAVPLQCLLHRDMQALGVLLAEMVFATRVRTLQPDAPLWVRFQAVRGLCTRHPKEVPVSLQPVLDTLLQMSGPEVPMGAERGKLDQLFEYRPVSQGLPPPCPSQLLSPFSSVVPFPPYFPALHRFILLYQARRVEDEAQGRELVFALWQQLGAVLKDITPEGLEILLPFVLSLMSEEHTAVYTAWYLFEPVAKALGPKNANKYLLKPLIGAYESPCQLHGRFYLYTDCFVAQLMVRLGLQAFLTHLLPHVLQVLAGAEASQEESKDLAGAAEEEESGLPGAGPGSCAFGEEIPMDGEPPASSGLGLPDYTSGVSFHDQADLPETEDFQAGLYVTESPQPQEAEAVSLGRLSDKSSTSETSLGEERAPDEGGAPVDKSSLRSGDSSQDLKQSEGSEEEEEEEDSCVVLEEEEGEQEEVTGASELTLSDTVLSMETVVAGGSGGDGEEEEEALPEQSEGKEQKILLDTACKMVRWLSAKLGPTVASRHVARNLLRLLTSCYVGPTRQQFTVSSGESPPLSAGNIYQKRPVLGDIVSGPVLSCLLHIARLYGEPVLTYQYLPYISYLVAPGSASGPSRLNSRKEAGLLAAVTLTQKIIVYLSDTTLMDILPRISHEVLLPVLSFLTSLVTGFPSGAQARTILCVKTISLIALICLRIGQEMVQQHLSEPVATFFQVFSQLHELRQQDLKLDPAGRGEGQLPQVVFSDGQQRPVDPALLDELQKVFTLEMAYTIYVPFSCLLGDIIRKIIPNHELVGELAALYLESISPSSRNPASVEPTMPGTGPEWDPHGGGCPQDDGHSGTFGSVLVGNRIQIPNDSRPENPGPLGPISGVGGGGLGSGSDDNALKQELPRSVHGLSGNWLAYWQYEIGVSQQDAHFHFHQIRLQSFPGHSGAVKCVAPLSSEDFFLSGSKDRTVRLWPLYNYGDGTSETAPRLVYTQHRKSVFFVGQLEAPQHVVSCDGAVHVWDPFTGKTLRTVEPLDSRVPLTAVAVMPAPHTSITMASSDSTLRFVDCRKPGLQHEFRLGGGLNPGLVRALAISPSGRSVVAGFSSGFMVLLDTRTGLVLRGWPAHEGDILQIKAVEGSVLVSSSSDHSLTVWKELEQKPTHHYKSASDPIHTFDLYGSEVVTGTVSNKIGVCSLLEPPSQATTKLSSENFRGTLTSLALLPTKRHLLLGSDNGVIRLLA.

A disordered region spans residues 1-27 (MAQGSGGREGALRTPAGGWHSPPSPDM). Residues 1 to 650 (MAQGSGGREG…TPCEASWTRD (650 aa)) are necessary and sufficient for the interaction with SQSTM1. Positions 337 to 614 (GQPTGQEELR…IPKLLVQTIQ (278 aa)) constitute a BEACH domain. Disordered stretches follow at residues 618 to 637 (GREDFTENPGQLPNGVGRPV), 694 to 718 (VASASRPGRRNKAAGADPGEGEEGR), 1022 to 1074 (SKDL…VSFH), 1097 to 1217 (PQEA…EGKE), 1523 to 1556 (PSSRNPASVEPTMPGTGPEWDPHGGGCPQDDGHS), and 1569 to 1602 (QIPNDSRPENPGPLGPISGVGGGGLGSGSDDNAL). Residues 1137–1146 (LRSGDSSQDL) are compositionally biased toward polar residues. Acidic residues predominate over residues 1151-1174 (GSEEEEEEEDSCVVLEEEEGEQEE). Residues 1586-1595 (SGVGGGGLGS) show a composition bias toward gly residues. 7 WD repeats span residues 1639 to 1677 (IRLQSFPGHSGAVKCVAPLSSEDFFLSGSKDRTVRLWPL), 1686 to 1724 (ETAPRLVYTQHRKSVFFVGQLEAPQHVVSCDGAVHVWDP), 1729 to 1769 (TLRT…FVDC), 1777 to 1815 (EFRLGGGLNPGLVRALAISPSGRSVVAGFSSGFMVLLDT), 1819 to 1856 (LVLRGWPAHEGDILQIKAVEGSVLVSSSSDHSLTVWKE), 1860 to 1896 (KPTHHYKSASDPIHTFDLYGSEVVTGTVSNKIGVCSL), and 1902 to 1941 (QATTKLSSENFRGTLTSLALLPTKRHLLLGSDNGVIRLLA).

The protein belongs to the WD repeat WDR81 family. Interacts with WDR91; involved in early to late endosome cargo transport. Interacts with BECN1; negatively regulates the PI3 kinase/PI3K activity associated with endosomal membranes. Interacts with SQSTM1; the interaction is direct and regulates the interaction of SQSTM1 with ubiquitinated proteins. Interacts with MAP1LC3C; recruits MAP1LC3C to ubiquitinated protein aggregates in the aggrephagy process. In terms of tissue distribution, widely expressed. In the brain, highest levels in cerebellum and corpus callosum.

It is found in the early endosome membrane. It localises to the late endosome membrane. The protein resides in the lysosome membrane. The protein localises to the cytoplasmic vesicle. Its subcellular location is the autophagosome membrane. It is found in the mitochondrion. It localises to the cytoplasm. The protein resides in the cytosol. Functionally, functions as a negative regulator of the PI3 kinase/PI3K activity associated with endosomal membranes via BECN1, a core subunit of the PI3K complex. By modifying the phosphatidylinositol 3-phosphate/PtdInsP3 content of endosomal membranes may regulate endosome fusion, recycling, sorting and early to late endosome transport. It is for instance, required for the delivery of cargos like BST2/tetherin from early to late endosome and thereby participates indirectly to their degradation by the lysosome. May also play a role in aggrephagy, the macroautophagic degradation of ubiquitinated protein aggregates. In this process, may regulate the interaction of SQSTM1 with ubiquitinated proteins and also recruit MAP1LC3C. May also be involved in maintenance of normal mitochondrial structure and organization. The sequence is that of WD repeat-containing protein 81 from Homo sapiens (Human).